The primary structure comprises 258 residues: UPF0328 protein ECU02_0090 (258 aa).

It belongs to the UPF0328 family.

The polypeptide is UPF0328 protein ECU02_0090 (Encephalitozoon cuniculi (strain GB-M1) (Microsporidian parasite)).